The primary structure comprises 114 residues: Large ribosomal subunit protein uL22 (114 aa).

The protein belongs to the universal ribosomal protein uL22 family. As to quaternary structure, part of the 50S ribosomal subunit.

In terms of biological role, this protein binds specifically to 23S rRNA; its binding is stimulated by other ribosomal proteins, e.g. L4, L17, and L20. It is important during the early stages of 50S assembly. It makes multiple contacts with different domains of the 23S rRNA in the assembled 50S subunit and ribosome. Its function is as follows. The globular domain of the protein is located near the polypeptide exit tunnel on the outside of the subunit, while an extended beta-hairpin is found that lines the wall of the exit tunnel in the center of the 70S ribosome. This Streptococcus sanguinis (strain SK36) protein is Large ribosomal subunit protein uL22.